A 210-amino-acid chain; its full sequence is Outer-membrane lipoprotein LolB (210 aa).

Positions 1–18 (MKKFTKILSLSTLLFLAG) are cleaved as a signal peptide. Cys19 carries the N-palmitoyl cysteine lipid modification. Cys19 is lipidated: S-diacylglycerol cysteine.

It belongs to the LolB family. As to quaternary structure, monomer.

The protein resides in the cell outer membrane. Plays a critical role in the incorporation of lipoproteins in the outer membrane after they are released by the LolA protein. The sequence is that of Outer-membrane lipoprotein LolB from Actinobacillus pleuropneumoniae serotype 5b (strain L20).